A 225-amino-acid polypeptide reads, in one-letter code: uncharacterized protein (225 aa).

This is an uncharacterized protein from Mycoplasma pneumoniae (strain ATCC 29342 / M129 / Subtype 1) (Mycoplasmoides pneumoniae).